Reading from the N-terminus, the 99-residue chain is Aspartyl/glutamyl-tRNA(Asn/Gln) amidotransferase subunit C (99 aa).

This sequence belongs to the GatC family. As to quaternary structure, heterotrimer of A, B and C subunits.

The catalysed reaction is L-glutamyl-tRNA(Gln) + L-glutamine + ATP + H2O = L-glutaminyl-tRNA(Gln) + L-glutamate + ADP + phosphate + H(+). It carries out the reaction L-aspartyl-tRNA(Asn) + L-glutamine + ATP + H2O = L-asparaginyl-tRNA(Asn) + L-glutamate + ADP + phosphate + 2 H(+). In terms of biological role, allows the formation of correctly charged Asn-tRNA(Asn) or Gln-tRNA(Gln) through the transamidation of misacylated Asp-tRNA(Asn) or Glu-tRNA(Gln) in organisms which lack either or both of asparaginyl-tRNA or glutaminyl-tRNA synthetases. The reaction takes place in the presence of glutamine and ATP through an activated phospho-Asp-tRNA(Asn) or phospho-Glu-tRNA(Gln). The sequence is that of Aspartyl/glutamyl-tRNA(Asn/Gln) amidotransferase subunit C from Paraburkholderia phymatum (strain DSM 17167 / CIP 108236 / LMG 21445 / STM815) (Burkholderia phymatum).